Reading from the N-terminus, the 243-residue chain is Secreted RxLR effector protein 28 (243 aa).

An N-terminal signal peptide occupies residues 1–26 (MHVSRIIAHIALATAITATTVSPTDA). The RxLR motif lies at 49–52 (RGLR). Residues 187 to 243 (NVDEDKGQNFGHSVSGPPTTTLTGPHTKSGIPPFENLVAPAKGSMPNTRRNGYQFFE) are disordered. A compositionally biased stretch (low complexity) spans 199 to 216 (SVSGPPTTTLTGPHTKSG).

It belongs to the RxLR effector family.

It localises to the secreted. It is found in the host cytoplasm. Its subcellular location is the host nucleus. Effector that significantly enhances susceptibilities of grapevine and tobacco to pathogens. Acts as a broad suppressor of cell death to interrupt plant immunity. Completely inhibits cell death induced by cell death-inducing proteins, including the PAMP elicitor INF1 from P.infestans. Reduces the transcriptional levels of the defense-related genes and impairs the H(2)O(2) accumulation in N.benthamiana. This Plasmopara viticola (Downy mildew of grapevine) protein is Secreted RxLR effector protein 28.